Reading from the N-terminus, the 208-residue chain is MFDVTRYATAAQSIVEAGRFLYERGWSPATSSNYSARIDGDHVAITVSGRHKGQLGAGDVMVVDLHGQAVQSDCRSSAETLLHTVIYQLYPEVGAVLHTHSVKATVLSRLIPAGQALELEGYELQKAFNGVQTHEGKLIVPVFDNTQDIPALAEETRDWFARHPEQPGYLIRGHGLYTWGRTMADCLRHIEAFEFLFECELETMRVRR.

H98 and H100 together coordinate Zn(2+).

This sequence belongs to the aldolase class II family. MtnB subfamily. It depends on Zn(2+) as a cofactor.

It carries out the reaction 5-(methylsulfanyl)-D-ribulose 1-phosphate = 5-methylsulfanyl-2,3-dioxopentyl phosphate + H2O. Its pathway is amino-acid biosynthesis; L-methionine biosynthesis via salvage pathway; L-methionine from S-methyl-5-thio-alpha-D-ribose 1-phosphate: step 2/6. Functionally, catalyzes the dehydration of methylthioribulose-1-phosphate (MTRu-1-P) into 2,3-diketo-5-methylthiopentyl-1-phosphate (DK-MTP-1-P). This is Methylthioribulose-1-phosphate dehydratase from Marinobacter nauticus (strain ATCC 700491 / DSM 11845 / VT8) (Marinobacter aquaeolei).